We begin with the raw amino-acid sequence, 874 residues long: Alanine--tRNA ligase (874 aa).

4 residues coordinate Zn(2+): His563, His567, Cys665, and His669.

The protein belongs to the class-II aminoacyl-tRNA synthetase family. Zn(2+) is required as a cofactor.

The protein resides in the cytoplasm. The enzyme catalyses tRNA(Ala) + L-alanine + ATP = L-alanyl-tRNA(Ala) + AMP + diphosphate. Functionally, catalyzes the attachment of alanine to tRNA(Ala) in a two-step reaction: alanine is first activated by ATP to form Ala-AMP and then transferred to the acceptor end of tRNA(Ala). Also edits incorrectly charged Ser-tRNA(Ala) and Gly-tRNA(Ala) via its editing domain. The polypeptide is Alanine--tRNA ligase (Actinobacillus pleuropneumoniae serotype 7 (strain AP76)).